The sequence spans 1388 residues: MAPRRNNGQCWCLLMLLSVSTPLPAVTQTRGATETASQGHLDLTQLIGVPLPSSVSFVTGYGGFPAYSFGPGANVGRPARTLIPSTFFRDFAISVVVKPSSTRGGVLFAITDAFQKVIYLGLRLSGVEDGHQRIILYYTEPGSHVSQEAAAFSVPVMTHRWNRFAMIVQGEEVTLLVNCEEHSRIPFQRSSQALAFESSAGIFMGNAGATGLERFTGSLQQLTVHPDPRTPEELCDPEESSASGETSGLQEADGVAEILEAVTYTQASPKEAKVEPINTPPTPSSPFEDMELSGEPVPEGTLETTNMSIIQHSSPKQGSGEILNDTLEGVHSVDGDPITDSGSGAGAFLDIAEEKNLAATAAGLAEVPISTAGEAEASSVPTGGPTLSMSTENPEEGVTPGPDNEERLAATAAGEAEALASMPGEVEASGVAPGELDLSMSAQSLGEEATVGPSSEDSLTTAAAATEVSLSTFEDEEASGVPTDGLAPLTATMAPERAVTSGPGDEEDLAAATTEEPLITAGGEESGSPPPDGPPLPLPTVAPERWITPAQREHVGMKGQAGPKGEKGDAGEELPGPPEPSGPVGPTAGAEAEGSGLGWGSDVGSGSGDLVGSEQLLRGPPGPPGPPGLPGIPGKPGTDVFMGPPGSPGEDGPAGEPGPPGPEGQPGVDGATGLPGMKGEKGARGPNGSVGEKGDPGNRGLPGPPGKKGQAGPPGVMGPPGPPGPPGPPGPGCTMGLGFEDTEGSGSTQLLNEPKLSRPTAAIGLKGEKGDRGPKGERGMDGASIVGPPGPRGPPGHIKVLSNSLINITHGFMNFSDIPELVGPPGPDGLPGLPGFPGPRGPKGDTGLPGFPGLKGEQGEKGEPGAILTEDIPLERLMGKKGEPGMHGAPGPMGPKGPPGHKGEFGLPGRPGRPGLNGLKGTKGDPGVIMQGPPGLPGPPGPPGPPGAVINIKGAIFPIPVRPHCKMPVDTAHPGSPELITFHGVKGEKGSWGLPGSKGEKGDQGAQGPPGPPLDLAYLRHFLNNLKGENGDKGFKGEKGEKGDINGSFLMSGPPGLPGNPGPAGQKGETVVGPQGPPGAPGLPGPPGFGRPGDPGPPGPPGPPGPPAILGAAVALPGPPGPPGQPGLPGSRNLVTAFSNMDDMLQKAHLVIEGTFIYLRDSTEFFIRVRDGWKKLQLGELIPIPADSPPPPALSSNPHQLLPPPNPISSANYEKPALHLAALNMPFSGDIRADFQCFKQARAAGLLSTYRAFLSSHLQDLSTIVRKAERYSLPIVNLKGQVLFNNWDSIFSGHGGQFNMHIPIYSFDGRDIMTDPSWPQKVIWHGSSPHGVRLVDNYCEAWRTADTAVTGLASPLSTGKILDQKAYSCANRLIVLCIENSFMTDARK.

Residues methionine 1–threonine 27 form the signal peptide. The region spanning alanine 66–leucine 249 is the Laminin G-like domain. The segment at threonine 223–glutamine 250 is disordered. The tract at residues arginine 229–valine 555 is nonhelical region 1 (NC1). Positions serine 240–leucine 249 are enriched in polar residues. Residues serine 243 and serine 247 are each glycosylated (O-linked (Xyl...) (chondroitin sulfate) serine). Threonine 265 carries an O-linked (GalNAc...) threonine glycan. The disordered stretch occupies residues glutamine 266 to threonine 301. N-linked (GlcNAc...) asparagine glycans are attached at residues asparagine 306 and asparagine 324. Serine 343 carries an O-linked (Xyl...) (chondroitin sulfate) serine glycan. Tandem repeats lie at residues alanine 358–leucine 408, alanine 409–leucine 459, threonine 460–leucine 509, and alanine 510–valine 555. The 4 X tandem repeats stretch occupies residues alanine 358–valine 555. A disordered region spans residues threonine 371 to proline 795. The span at serine 379–glutamate 392 shows a compositional bias: polar residues. Positions alanine 409 to alanine 420 are enriched in low complexity. A compositionally biased stretch (polar residues) spans glycine 452–threonine 472. Residues alanine 510–glycine 527 are compositionally biased toward low complexity. The span at serine 528–threonine 540 shows a compositional bias: pro residues. The interval glycine 556–glutamate 573 is triple-helical region 1 (COL1). The interval leucine 574–arginine 618 is nonhelical region 2 (NC2). Over residues serine 595 to aspartate 609 the composition is skewed to gly residues. Collagen-like domains lie at glycine 619 to glutamate 680 and lysine 681 to proline 731. The segment at glycine 619–glycine 732 is triple-helical region 2 (COL2). Pro residues predominate over residues proline 620–proline 630. Asparagine 687 carries an N-linked (GlcNAc...) asparagine glycan. Residues valine 716 to proline 731 are compositionally biased toward pro residues. The tract at residues cysteine 733–isoleucine 763 is nonhelical region 3 (NC3). The O-linked (Xyl...) (chondroitin sulfate) serine glycan is linked to serine 745. The interval glycine 764–isoleucine 798 is triple-helical region 3 (COL3). Over residues lysine 766–methionine 780 the composition is skewed to basic and acidic residues. Residues lysine 799 to valine 822 are nonhelical region 4 (NC4). 2 N-linked (GlcNAc...) asparagine glycosylation sites follow: asparagine 807 and asparagine 814. The 43-residue stretch at glycine 823–glycine 865 folds into the Collagen-like 3 domain. A triple-helical region 4 (COL4) region spans residues glycine 823–isoleucine 867. Pro residues predominate over residues proline 827–arginine 840. The segment at proline 827–proline 864 is disordered. A nonhelical region 5 (NC5) region spans residues leucine 868–methionine 878. The 49-residue stretch at glycine 879–glycine 927 folds into the Collagen-like 4 domain. The tract at residues glycine 879–valine 949 is triple-helical region 5 (COL5). The interval isoleucine 950–histidine 983 is nonhelical region 6 (NC6). The tract at residues glycine 984–proline 1013 is triple-helical region 6 (COL6). Disordered regions lie at residues glutamate 988 to leucine 1016 and glutamate 1029 to asparagine 1133. Residues leucine 1014–lysine 1027 form a nonhelical region 7 (NC7) region. A triple-helical region 7 (COL7) region spans residues glycine 1028–isoleucine 1045. The segment covering glutamate 1029 to aspartate 1044 has biased composition (basic and acidic residues). Residue asparagine 1046 is glycosylated (N-linked (GlcNAc...) asparagine). Positions asparagine 1046–serine 1052 are nonhelical region 8 (NC8). Positions glycine 1053–proline 1107 are triple-helical region 8 (COL8). 2 stretches are compositionally biased toward pro residues: residues glutamine 1075–proline 1107 and proline 1117–proline 1126. The segment at alanine 1108–proline 1117 is nonhelical region 9 (NC9). Residues glycine 1118 to arginine 1132 form a triple-helical region 9 (COL9) region. The interval asparagine 1133 to lysine 1388 is nonhelical region 10 (NC10). Intrachain disulfides connect cysteine 1237–cysteine 1377 and cysteine 1339–cysteine 1369.

It belongs to the multiplexin collagen family. In terms of assembly, trimer; disulfide-linked. As to quaternary structure, interacts moderately with EFEMP2. Prolines at the third position of the tripeptide repeating unit (G-X-Y) are hydroxylated in some or all of the chains. Post-translationally, O-glycosylated; with core 1 or possibly core 8 glycans. Contains chondroitin sulfate. As to expression, detected in fibroblasts and urine (at protein level). Detected in placenta (at protein level). Expressed predominantly in internal organs such as adrenal gland, pancreas and kidney.

Its subcellular location is the secreted. The protein resides in the extracellular space. The protein localises to the extracellular matrix. In terms of biological role, structural protein that stabilizes microvessels and muscle cells, both in heart and in skeletal muscle. Restin potently inhibits angiogenesis. In Homo sapiens (Human), this protein is Collagen alpha-1(XV) chain (COL15A1).